The primary structure comprises 327 residues: Sphingomyelin synthase-related 2 (327 aa).

5 helical membrane passes run 54-74, 99-119, 131-151, 192-212, and 220-240; these read LLATAMVGVGWLSNEVALAWV, AIRIAEYIMMILLISALLVMF, VFFCIAMAYSFRALCVTIFQV, LCGDLIVSGHTLTIFTAFLVF, and LQPLSHIYHVLAFTALFSILL. Residue histidine 201 is part of the active site. Residues 241 to 327 are Cytoplasmic-facing; it reads ARKHYMIDIV…TLKKSRRSFE (87 aa). Catalysis depends on residues histidine 244 and aspartate 248.

It belongs to the sphingomyelin synthase family.

The protein localises to the membrane. The chain is Sphingomyelin synthase-related 2 from Caenorhabditis elegans.